The primary structure comprises 130 residues: MKELKEHPFILMIIVLGLFLVSIGGYYYRENFATDSITQGVTETVRASVISNADNSSRVQSGELFIVKSDFEKDFKKRIESNKLVKISSGATYEFKYLDNKNGSTKAIRAIIHDGDQTYQATYKVSIASS.

Residues Pro-8–Tyr-28 traverse the membrane as a helical segment.

It localises to the membrane. This is an uncharacterized protein from Bacillus anthracis.